Reading from the N-terminus, the 447-residue chain is Tubulin beta-1 chain (447 aa).

GTP is bound by residues Gln11, Glu69, Ser138, Gly142, Thr143, Gly144, Asn204, and Asn226. Glu69 contacts Mg(2+). The segment at 427–447 (EATADEDAEFEEEQEAEVEEN) is disordered. Residues 429–447 (TADEDAEFEEEQEAEVEEN) show a composition bias toward acidic residues.

This sequence belongs to the tubulin family. As to quaternary structure, dimer of alpha and beta chains. A typical microtubule is a hollow water-filled tube with an outer diameter of 25 nm and an inner diameter of 15 nM. Alpha-beta heterodimers associate head-to-tail to form protofilaments running lengthwise along the microtubule wall with the beta-tubulin subunit facing the microtubule plus end conferring a structural polarity. Microtubules usually have 13 protofilaments but different protofilament numbers can be found in some organisms and specialized cells. Mg(2+) serves as cofactor.

The protein resides in the cytoplasm. It is found in the cytoskeleton. In terms of biological role, tubulin is the major constituent of microtubules, a cylinder consisting of laterally associated linear protofilaments composed of alpha- and beta-tubulin heterodimers. Microtubules grow by the addition of GTP-tubulin dimers to the microtubule end, where a stabilizing cap forms. Below the cap, tubulin dimers are in GDP-bound state, owing to GTPase activity of alpha-tubulin. The protein is Tubulin beta-1 chain of Glossina morsitans morsitans (Savannah tsetse fly).